Here is a 454-residue protein sequence, read N- to C-terminus: Bifunctional protein GlmU (454 aa).

Positions 1–226 are pyrophosphorylase; it reads MALNVVILAA…AIEVEGANNR (226 aa). Residues 8-11, K22, Q73, 78-79, 100-102, G137, E151, N166, and N224 each bind UDP-N-acetyl-alpha-D-glucosamine; these read LAAG, GT, and YGD. D102 contributes to the Mg(2+) binding site. A Mg(2+)-binding site is contributed by N224. The tract at residues 227–247 is linker; that stretch reads VQLAQLERAYQAREAEKLMIA. The N-acetyltransferase stretch occupies residues 248-454; it reads GANLRDPSRI…GWQRPVKIKE (207 aa). UDP-N-acetyl-alpha-D-glucosamine is bound by residues R330 and K348. Catalysis depends on H360, which acts as the Proton acceptor. Positions 363 and 374 each coordinate UDP-N-acetyl-alpha-D-glucosamine. Acetyl-CoA-binding positions include A377, 383–384, S402, A420, and R437; that span reads NY.

In the N-terminal section; belongs to the N-acetylglucosamine-1-phosphate uridyltransferase family. This sequence in the C-terminal section; belongs to the transferase hexapeptide repeat family. In terms of assembly, homotrimer. Mg(2+) is required as a cofactor.

It localises to the cytoplasm. It carries out the reaction alpha-D-glucosamine 1-phosphate + acetyl-CoA = N-acetyl-alpha-D-glucosamine 1-phosphate + CoA + H(+). The enzyme catalyses N-acetyl-alpha-D-glucosamine 1-phosphate + UTP + H(+) = UDP-N-acetyl-alpha-D-glucosamine + diphosphate. The protein operates within nucleotide-sugar biosynthesis; UDP-N-acetyl-alpha-D-glucosamine biosynthesis; N-acetyl-alpha-D-glucosamine 1-phosphate from alpha-D-glucosamine 6-phosphate (route II): step 2/2. Its pathway is nucleotide-sugar biosynthesis; UDP-N-acetyl-alpha-D-glucosamine biosynthesis; UDP-N-acetyl-alpha-D-glucosamine from N-acetyl-alpha-D-glucosamine 1-phosphate: step 1/1. It participates in bacterial outer membrane biogenesis; LPS lipid A biosynthesis. Its function is as follows. Catalyzes the last two sequential reactions in the de novo biosynthetic pathway for UDP-N-acetylglucosamine (UDP-GlcNAc). The C-terminal domain catalyzes the transfer of acetyl group from acetyl coenzyme A to glucosamine-1-phosphate (GlcN-1-P) to produce N-acetylglucosamine-1-phosphate (GlcNAc-1-P), which is converted into UDP-GlcNAc by the transfer of uridine 5-monophosphate (from uridine 5-triphosphate), a reaction catalyzed by the N-terminal domain. In Shewanella sp. (strain MR-7), this protein is Bifunctional protein GlmU.